Reading from the N-terminus, the 62-residue chain is Keratin-associated protein 6-2 (62 aa).

The protein belongs to the KRTAP type 6 family. Interacts with hair keratins.

Its function is as follows. In the hair cortex, hair keratin intermediate filaments are embedded in an interfilamentous matrix, consisting of hair keratin-associated proteins (KRTAP), which are essential for the formation of a rigid and resistant hair shaft through their extensive disulfide bond cross-linking with abundant cysteine residues of hair keratins. The matrix proteins include the high-sulfur and high-glycine-tyrosine keratins. This Homo sapiens (Human) protein is Keratin-associated protein 6-2 (KRTAP6-2).